The primary structure comprises 362 residues: MAQVFKVAVLPGDGIGPEVMAEALRVLDAVEAKYDVKFERTHANVGGAGIDIEGKALPETTVNICKAADAILFGSVGGPKWESLPPDEQPERGALLPLRKIFGLYANLRPAIIFPSLTGASSLKEEVIAGGFNVLVIRELTGGIYFAQPKGIEGEGRDRVGFDTMRYSVPEIERITHVAFQAARKRGKKVCSIDKANVLSSSVLWREVVTGIAKEYPDVELSHMYVDNAAMQLVRWPKQFDVILCENMFGDILSDEAAMLTGSLGMLPSASLAEGTFGMYEPSGGSAPDIAGQGIANPIAQILSMGMMLKFSFGMVDAADAIDNAVATVLDQGFRTRDIYQQKDGEKLVNTKEMGDAIIAAL.

78-91 (GPKWESLPPDEQPE) serves as a coordination point for NAD(+). Residues Arg99, Arg109, Arg138, and Asp227 each coordinate substrate. The Mg(2+) site is built by Asp227, Asp251, and Asp255. Position 285–297 (285–297 (GSAPDIAGQGIAN)) interacts with NAD(+).

This sequence belongs to the isocitrate and isopropylmalate dehydrogenases family. LeuB type 1 subfamily. Homodimer. The cofactor is Mg(2+). Mn(2+) serves as cofactor.

Its subcellular location is the cytoplasm. It catalyses the reaction (2R,3S)-3-isopropylmalate + NAD(+) = 4-methyl-2-oxopentanoate + CO2 + NADH. It participates in amino-acid biosynthesis; L-leucine biosynthesis; L-leucine from 3-methyl-2-oxobutanoate: step 3/4. Its function is as follows. Catalyzes the oxidation of 3-carboxy-2-hydroxy-4-methylpentanoate (3-isopropylmalate) to 3-carboxy-4-methyl-2-oxopentanoate. The product decarboxylates to 4-methyl-2 oxopentanoate. In Geobacter sulfurreducens (strain ATCC 51573 / DSM 12127 / PCA), this protein is 3-isopropylmalate dehydrogenase.